The following is a 422-amino-acid chain: Histidine--tRNA ligase (422 aa).

This sequence belongs to the class-II aminoacyl-tRNA synthetase family. Homodimer.

It is found in the cytoplasm. The catalysed reaction is tRNA(His) + L-histidine + ATP = L-histidyl-tRNA(His) + AMP + diphosphate + H(+). This is Histidine--tRNA ligase from Alcanivorax borkumensis (strain ATCC 700651 / DSM 11573 / NCIMB 13689 / SK2).